A 1858-amino-acid chain; its full sequence is Protein ROS1C (1858 aa).

Residues 347 to 356 show a composition bias toward basic and acidic residues; sequence TEALKGEDAP. Disordered regions lie at residues 347 to 416 and 1288 to 1309; these read TEAL…AEPF and PDTAAQASKPKKSRTTSKKNSE. Basic residues-rich tracts occupy residues 360–370 and 394–404; these read LKTRRRKHRPK and KPKRKYVRKNR. [4Fe-4S] cluster-binding residues include Cys-1492, Cys-1499, Cys-1502, and Cys-1508.

It belongs to the DNA glycosylase family. DEMETER subfamily. [4Fe-4S] cluster serves as cofactor. Expressed in pistils and immature seeds. Expressed a low levels in roots, leaves and anthers.

The protein localises to the nucleus. In terms of biological role, bifunctional DNA glycosylase/lyase, which excises 5-methylcytosine (5-meC) and 5-hydroxymethylcytosine (5-hmeC), leaving an apyrimidinic (AP) site that is subsequently incised by the lyase activity. Is responsible for the demethylation of methylated cytosine residues of Tos17 retrotransposon DNA. Demethylation of Tos17 cytosine residues promotes its transposition. May be involved in seed development. The sequence is that of Protein ROS1C from Oryza sativa subsp. japonica (Rice).